A 763-amino-acid polypeptide reads, in one-letter code: Phosphoglycerol transferase I (763 aa).

4 helical membrane passes run 1 to 21, 26 to 46, 77 to 97, and 108 to 128; these read MSELLSIALFLASVLIYAWKA, WWFAAILAVLGLFVVLNITLY, ILPGAGIVLALAAVFSALGWV, and FGYSLLALLLALGSVDASPAF.

Belongs to the OpgB family.

The protein localises to the cell inner membrane. It catalyses the reaction a phosphatidylglycerol + a membrane-derived-oligosaccharide D-glucose = a 1,2-diacyl-sn-glycerol + a membrane-derived-oligosaccharide 6-(glycerophospho)-D-glucose.. It functions in the pathway glycan metabolism; osmoregulated periplasmic glucan (OPG) biosynthesis. Transfers a phosphoglycerol residue from phosphatidylglycerol to the membrane-bound nascent glucan backbones. This is Phosphoglycerol transferase I from Citrobacter koseri (strain ATCC BAA-895 / CDC 4225-83 / SGSC4696).